We begin with the raw amino-acid sequence, 386 residues long: Acetylornithine aminotransferase (386 aa).

Residues 96-97 (GA) and Phe123 contribute to the pyridoxal 5'-phosphate site. Arg126 contributes to the N(2)-acetyl-L-ornithine binding site. Position 208 to 211 (208 to 211 (DEVQ)) interacts with pyridoxal 5'-phosphate. An N6-(pyridoxal phosphate)lysine modification is found at Lys237. Ser265 is a N(2)-acetyl-L-ornithine binding site. Residue Thr266 participates in pyridoxal 5'-phosphate binding.

This sequence belongs to the class-III pyridoxal-phosphate-dependent aminotransferase family. ArgD subfamily. As to quaternary structure, homodimer. The cofactor is pyridoxal 5'-phosphate.

It localises to the cytoplasm. It catalyses the reaction N(2)-acetyl-L-ornithine + 2-oxoglutarate = N-acetyl-L-glutamate 5-semialdehyde + L-glutamate. It participates in amino-acid biosynthesis; L-arginine biosynthesis; N(2)-acetyl-L-ornithine from L-glutamate: step 4/4. The sequence is that of Acetylornithine aminotransferase from Bacillus cereus (strain ATCC 14579 / DSM 31 / CCUG 7414 / JCM 2152 / NBRC 15305 / NCIMB 9373 / NCTC 2599 / NRRL B-3711).